Here is a 338-residue protein sequence, read N- to C-terminus: Inositol 2-dehydrogenase (338 aa).

Belongs to the Gfo/Idh/MocA family. Homotetramer.

The enzyme catalyses myo-inositol + NAD(+) = scyllo-inosose + NADH + H(+). Involved in the oxidation of myo-inositol (MI) to 2-keto-myo-inositol (2KMI or 2-inosose). In Azotobacter vinelandii (strain DJ / ATCC BAA-1303), this protein is Inositol 2-dehydrogenase.